The primary structure comprises 360 residues: uncharacterized protein (360 aa).

The ABC transporter domain maps to 4 to 235 (LSLQHIQKIY…PANMFVAGFI (232 aa)). An ATP-binding site is contributed by 37–44 (GPSGCGKS).

This sequence belongs to the ABC transporter superfamily.

This is an uncharacterized protein from Escherichia coli O157:H7.